The following is a 217-amino-acid chain: Homeobox protein Hox-B7 (217 aa).

Positions Ile-126 to Arg-131 match the Antp-type hexapeptide motif. Positions Arg-137–Asn-196 form a DNA-binding region, homeobox. Positions Trp-192–Glu-217 are disordered.

Belongs to the Antp homeobox family. Forms a DNA-binding heterodimer with transcription factor PBX1.

It is found in the nucleus. Its function is as follows. Sequence-specific transcription factor which is part of a developmental regulatory system that provides cells with specific positional identities on the anterior-posterior axis. The protein is Homeobox protein Hox-B7 (Hoxb7) of Mus musculus (Mouse).